The sequence spans 306 residues: Glutaminase (306 aa).

Substrate-binding residues include Ser62, Asn114, Glu159, Asn166, Tyr190, Tyr242, and Val260.

It belongs to the glutaminase family. As to quaternary structure, homotetramer.

It catalyses the reaction L-glutamine + H2O = L-glutamate + NH4(+). The sequence is that of Glutaminase from Clostridium tetani (strain Massachusetts / E88).